A 253-amino-acid polypeptide reads, in one-letter code: Glucosamine-6-phosphate deaminase (253 aa).

The Proton acceptor; for enolization step role is filled by aspartate 67. Catalysis depends on asparagine 136, which acts as the For ring-opening step. The Proton acceptor; for ring-opening step role is filled by histidine 138. Glutamate 143 acts as the For ring-opening step in catalysis.

Belongs to the glucosamine/galactosamine-6-phosphate isomerase family. NagB subfamily.

It carries out the reaction alpha-D-glucosamine 6-phosphate + H2O = beta-D-fructose 6-phosphate + NH4(+). It participates in amino-sugar metabolism; N-acetylneuraminate degradation; D-fructose 6-phosphate from N-acetylneuraminate: step 5/5. Its function is as follows. Catalyzes the reversible isomerization-deamination of glucosamine 6-phosphate (GlcN6P) to form fructose 6-phosphate (Fru6P) and ammonium ion. This is Glucosamine-6-phosphate deaminase from Thermoanaerobacter sp. (strain X514).